The following is a 293-amino-acid chain: Small ribosomal subunit biogenesis GTPase RsgA (293 aa).

In terms of domain architecture, CP-type G spans 63–223; sequence KNQLNRPPIA…VADTPGFSSL (161 aa). GTP-binding positions include 112 to 115 and 166 to 174; these read SKTD and GQSGVGKSS. Zn(2+) is bound by residues C247, C252, H254, and C260.

Belongs to the TRAFAC class YlqF/YawG GTPase family. RsgA subfamily. As to quaternary structure, monomer. Associates with 30S ribosomal subunit, binds 16S rRNA. It depends on Zn(2+) as a cofactor.

The protein localises to the cytoplasm. Its function is as follows. One of several proteins that assist in the late maturation steps of the functional core of the 30S ribosomal subunit. Helps release RbfA from mature subunits. May play a role in the assembly of ribosomal proteins into the subunit. Circularly permuted GTPase that catalyzes slow GTP hydrolysis, GTPase activity is stimulated by the 30S ribosomal subunit. The sequence is that of Small ribosomal subunit biogenesis GTPase RsgA from Shouchella clausii (strain KSM-K16) (Alkalihalobacillus clausii).